The sequence spans 790 residues: VTAAPAATAATAATPATAALNFAATAATPATPATPALIFAATAATAATPATAALNFAATAATPATAATPALIFAAAAATAATPATAALNFAATAATPATAATPALIFAATAATAATPATPAFHFAATAATPATAATPALIFAATAATAATPATPAFHFAATAATPATAATPALIFAATAATAATPATAALNFAATAATPATAATPALIFAATAATAATPATAALNFAATAATAATPATAACNFAATAATPATAATPALIFAATAATAATPATAACNFAATAATPATAATPALIFAATAATAATPATAALNFAATAATPATAATPALIFAATAATAATPATAALNFAATAATPATAATPALIFAATAATAATPATAALNFAATAATAATPATPAFNFAATAATPATAATPALIFAATAATAATPATAALNFAATAATPATAATPALIFAATAATAATPATAALHFAATAATAATPATAALNFAATAATPATAATPALIFAATAATAATPATAAFNFAATAATAATPATAALNFAATAATPATAATPALIFAATAATAATPATAALNFAATAATPATAATPALIFAATAATAATPATPAFHFAATAATPATAATPALIFAATAATAATPATAALNFAATAATAATPATAALNFAATAATPATAATPALIFAATAATAATPATAALNFAATAATPATAATPALIFAATAATAATPATAAFNFAATAATAATPATAATPALIFAATAATAATPATPATPALIFAATAATAATPATPALNFAATAATAATTAARG.

Positions 1 to 5 (VTAAP) are excised as a propeptide.

In terms of processing, O-glycosylated; contains disaccharide galactose-N-acetylgalactosamine attached to threonines in AFGP8 and AFGP7. In terms of tissue distribution, synthesized by the liver and secreted into the blood from which they become distributed to almost the entire extracellular space.

Its subcellular location is the secreted. Antifreeze proteins lower the blood freezing point. The sequence is that of Ice-structuring glycoprotein (afgp8) from Notothenia neglecta (Yellowbelly rockcod).